The following is a 282-amino-acid chain: Cyclic AMP-dependent transcription factor ATF-5 (282 aa).

A required for protein stabilization induced by IL1B region spans residues 1–21 (MSLLATLGLELDRALLPASGL). Lys-29 is modified (N6-acetyllysine; by EP300). Disordered regions lie at residues 116 to 152 (FLDAPPLPPPSPPPLPPPPLPPAPSLPLSLPSFDLPQ) and 173 to 238 (EEVG…ALEG). Residues 119–217 (APPLPPPSPP…GDRKQKKRDQ (99 aa)) form an interaction with PTP4A1 region. Positions 120-140 (PPLPPPSPPPLPPPPLPPAPS) are enriched in pro residues. Over residues 141–150 (LPLSLPSFDL) the composition is skewed to low complexity. Positions 178 to 194 (PPLPPPQQPPPPSPPQP) are enriched in pro residues. In terms of domain architecture, bZIP spans 208–271 (GDRKQKKRDQ…QYVKDLLIEV (64 aa)). Residues 210-230 (RKQKKRDQNKSAALRYRQRKR) are basic motif. A leucine-zipper region spans residues 236–250 (LEGECQGLEARNREL). Ser-256 is modified (phosphoserine).

It belongs to the bZIP family. In terms of assembly, binds DNA as a dimer. Interacts with PTP4A1/PRL-1. Interacts with CCND3, but not with CCND1 or CCND2. Interacts with HSPA1A or HSPA1B; the interaction protects ATF5 from degradation via proteasome-dependent and caspase-dependent processes. Interacts (via C-terminal region) with NPM1 (via C-terminal region); the interaction leads to loss of association between HSPA1A or HSPA1B and ATF5 and promotes ATF5 degradation via proteasome-dependent and caspase-dependent processes. Interacts with NLK; the interaction stabilizes ATF5 at the protein level in a kinase-independent manner. Interacts with alpha-tubulin, gamma-tubulin members TUBGCP2 and TUBGCP4, PCNT; the ATF5:PCNT:polyglutamylated tubulin (PGT) tripartite unites the mother centriole and the pericentriolar material (PCM) in the centrosome. Interacts with CEBPB and EP300; EP300 is required for ATF5 and CEBPB interaction and DNA binding. In terms of processing, ubiquitinated by CDC34 and UBE2B in order to be degraded by the proteasome. Cisplatin inhibits ubiquitination and proteasome-mediated degradation by inhibiting the interaction with CDC34. Ubiquitination and degradation by the proteasome are inhibited by NLK in a kinase-independent manner. Phosphorylated by NLK, probably at Ser-92, Thr-94, Ser-126 and Ser-190. Post-translationally, acetylated at Lys-29 by EP300, the acetylation enhances the interaction with CEBPB, DNA-binding and transactivation activity. In terms of tissue distribution, widely expressed with higher expression levels in liver.

It localises to the cytoplasm. The protein localises to the nucleus. The protein resides in the cytoskeleton. It is found in the microtubule organizing center. Its subcellular location is the centrosome. Functionally, transcription factor that either stimulates or represses gene transcription through binding of different DNA regulatory elements such as cAMP response element (CRE) (consensus: 5'-GTGACGT[AC][AG]-3'), ATF5-specific response element (ARE) (consensus: 5'-C[CT]TCT[CT]CCTT[AT]-3') but also the amino acid response element (AARE), present in many viral and cellular promoters. Critically involved, often in a cell type-dependent manner, in cell survival, proliferation, and differentiation. Its transcriptional activity is enhanced by CCND3 and slightly inhibited by CDK4. Important regulator of the cerebral cortex formation, functions in cerebral cortical neuroprogenitor cells to maintain proliferation and to block differentiation into neurons. Must be down-regulated in order for such cells to exit the cycle and differentiate. Participates in the pathways by which SHH promotes cerebellar granule neuron progenitor cells proliferation. Critical for survival of mature olfactory sensory neurons (OSN), directs expression of OSN-specific genes. May be involved in osteogenic differentiation. Promotes cell proliferation and survival by inducing the expression of EGR1 sinergistically with ELK1. Once acetylated by EP300, binds to ARE sequences on target genes promoters, such as BCL2 and EGR1. Plays an anti-apoptotic role through the transcriptional regulation of BCL2, this function seems to be cell type-dependent. Cooperates with NR1I3/CAR in the transcriptional activation of CYP2B6 in liver. In hepatic cells, represses CRE-dependent transcription and inhibits proliferation by blocking at G2/M phase. May act as a negative regulator of IL1B transduction pathway in liver. Upon IL1B stimulus, cooperates with NLK to activate the transactivation activity of C/EBP subfamily members. Besides its function of transcription factor, acts as a cofactor of CEBPB to activate CEBPA and promote adipocyte differentiation. Regulates centrosome dynamics in a cell-cycle- and centriole-age-dependent manner. Forms 9-foci symmetrical ring scaffold around the mother centriole to control centrosome function and the interaction between centrioles and pericentriolar material. In Homo sapiens (Human), this protein is Cyclic AMP-dependent transcription factor ATF-5 (ATF5).